The primary structure comprises 515 residues: Cytochrome P450 monooxygenase paxP (515 aa).

A helical membrane pass occupies residues 20–36; that stretch reads SLLWKLGVFAVLVYFLL. Cysteine 456 contacts heme.

It belongs to the cytochrome P450 family. Heme is required as a cofactor.

The protein resides in the membrane. It functions in the pathway secondary metabolite biosynthesis. Cytochrome P450 monooxygenase; part of the ATM2 gene cluster that mediates the biosynthesis of paxilline, a mycotoxin that acts as an inhibitor of mammalian maxi-K channels. PaxG, the geranylgeranyl diphosphate (GGPP) synthase is proposed to catalyze the first step in paxilline biosynthesis. Condensation of indole-3-glycerol phosphate with GGPP by paxC then forms 3-geranylgeranylindole (3-GGI), followed by epoxidation and cyclization of this intermediate (by paxM and paxB) to form paspaline. Paspaline is subsequently converted to 13-desoxypaxilline by paxP, the latter being then converted to paxilline by paxQ. Finally paxilline can be mono- and di-prenylated by paxD. PaxP can also utilized beta-paxitriol and alpha-PC-M6 as substrates converting them to paxilline. In Penicillium paxilli, this protein is Cytochrome P450 monooxygenase paxP.